A 530-amino-acid chain; its full sequence is Tegument protein UL21 homolog (530 aa).

It belongs to the alphaherpesvirinae UL21 protein family. In terms of assembly, interacts (via C-terminus) with UL16.

It localises to the virion tegument. It is found in the host cytoplasm. Its subcellular location is the host nucleus. Functionally, may participate in DNA packaging/capsid maturation events. Promotes efficient incorporation of tegument proteins UL46, UL49, and US3 homologs into virions. May also play a role in capsid transport to the trans-Golgi network (TGN). The polypeptide is Tegument protein UL21 homolog (Equus caballus (Horse)).